The chain runs to 149 residues: Transcriptional repressor NrdR (149 aa).

A zinc finger spans residues 3 to 34 (CPFCSATDTKVIDSRLVSDGHQVRRRRQCLAC). The ATP-cone domain maps to 49–139 (PKVIKSNGNR…VYRSFEDIKE (91 aa)).

It belongs to the NrdR family. Requires Zn(2+) as cofactor.

In terms of biological role, negatively regulates transcription of bacterial ribonucleotide reductase nrd genes and operons by binding to NrdR-boxes. This chain is Transcriptional repressor NrdR, found in Aliivibrio salmonicida (strain LFI1238) (Vibrio salmonicida (strain LFI1238)).